The primary structure comprises 108 residues: UPF0145 protein Fnod_0426 (108 aa).

Belongs to the UPF0145 family.

This is UPF0145 protein Fnod_0426 from Fervidobacterium nodosum (strain ATCC 35602 / DSM 5306 / Rt17-B1).